Reading from the N-terminus, the 169-residue chain is Nascent polypeptide-associated complex subunit alpha (169 aa).

An NAC-A/B domain is found at 14–78 (NKNEKKAREM…AKIDNFSQKL (65 aa)). The disordered stretch occupies residues 85–128 (IQSVSKSPEEIQKDMQLAADQAGDESAKPAAAAEEDDEAPVDAG). In terms of domain architecture, UBA spans 130 to 169 (LSAEDIELVASQANVSKNKAIKALKEHNGDIVNAIMALSK).

The protein belongs to the NAC-alpha family. In terms of assembly, part of the nascent polypeptide-associated complex (NAC), consisting of EGD2 and EGD1. NAC associates with ribosomes via EGD1.

Its subcellular location is the cytoplasm. The protein localises to the nucleus. In terms of biological role, component of the nascent polypeptide-associated complex (NAC), a dynamic component of the ribosomal exit tunnel, protecting the emerging polypeptides from interaction with other cytoplasmic proteins to ensure appropriate nascent protein targeting. The NAC complex also promotes mitochondrial protein import by enhancing productive ribosome interactions with the outer mitochondrial membrane and blocks the inappropriate interaction of ribosomes translating non-secretory nascent polypeptides with translocation sites in the membrane of the endoplasmic reticulum. EGD2 may also be involved in transcription regulation. This chain is Nascent polypeptide-associated complex subunit alpha (EGD2), found in Vanderwaltozyma polyspora (strain ATCC 22028 / DSM 70294 / BCRC 21397 / CBS 2163 / NBRC 10782 / NRRL Y-8283 / UCD 57-17) (Kluyveromyces polysporus).